The primary structure comprises 289 residues: Delta-sarcoglycan (289 aa).

The Cytoplasmic segment spans residues 1–37; the sequence is MPQEQYSHHRSTMPSSEGPHIYKVGIYGWRKRCLYFF. The chain crosses the membrane as a helical; Signal-anchor for type II membrane protein span at residues 38 to 56; it reads VLLLMILILVNLAMTIWIL. Over 57–289 the chain is Extracellular; the sequence is KVMNFTIDGM…TCQINTSVCL (233 aa). N-linked (GlcNAc...) asparagine glycosylation is found at Asn60 and Asn108. Disulfide bonds link Cys263–Cys288 and Cys265–Cys281. N-linked (GlcNAc...) asparagine glycosylation occurs at Asn284.

It belongs to the sarcoglycan beta/delta/gamma/zeta family. Interacts with FLNC. Cross-link to form 2 major subcomplexes: one consisting of SGCB, SGCD and SGCG and the other consisting of SGCB and SGCD. The association between SGCB and SGCG is particularly strong while SGCA is loosely associated with the other sarcoglycans. Interacts with DAG1. Disulfide bonds are present. Most strongly expressed in skeletal and heart muscle. Also detected in proliferating myoblasts.

The protein resides in the cell membrane. Its subcellular location is the sarcolemma. The protein localises to the cytoplasm. It is found in the cytoskeleton. Its function is as follows. Component of the sarcoglycan complex, a subcomplex of the dystrophin-glycoprotein complex which forms a link between the F-actin cytoskeleton and the extracellular matrix. The polypeptide is Delta-sarcoglycan (Sgcd) (Mus musculus (Mouse)).